The primary structure comprises 608 residues: Albumin (608 aa).

The signal sequence occupies residues 1-18 (MKWVTFLLLLFVSDSAFS). The propeptide occupies 19-24 (RGLFRR). Albumin domains lie at 19–211 (RGLF…ALKE), 212–403 (KALA…EFQP), and 404–601 (LVEE…KLVA). A Cu cation-binding site is contributed by His-27. The residue at position 29 (Ser-29) is a Phosphoserine. Positions 30 and 37 each coordinate Ca(2+). Cys-77 and Cys-86 are oxidised to a cystine. Phosphoserine is present on residues Ser-82 and Ser-89. His-91 is a binding site for Zn(2+). 6 disulfide bridges follow: Cys-99–Cys-115, Cys-114–Cys-125, Cys-148–Cys-193, Cys-192–Cys-201, Cys-224–Cys-270, and Cys-269–Cys-277. Ca(2+) is bound at residue Glu-268. Zn(2+) contacts are provided by His-271 and Asp-273. Residues Asp-273, Glu-276, and Asp-279 each coordinate Ca(2+). Intrachain disulfides connect Cys-289–Cys-303, Cys-302–Cys-313, Cys-340–Cys-385, Cys-384–Cys-393, Cys-416–Cys-462, Cys-461–Cys-472, Cys-485–Cys-501, and Cys-500–Cys-511. Ser-297 carries the phosphoserine modification. Ser-443 carries the post-translational modification Phosphoserine. Phosphothreonine is present on residues Thr-444 and Thr-446. At Lys-460 the chain carries N6-succinyllysine. Ser-513 bears the Phosphoserine mark. 2 disulfide bridges follow: Cys-538–Cys-583 and Cys-582–Cys-591. N6-succinyllysine is present on Lys-543. The residue at position 558 (Lys-558) is an N6-methyllysine. Residue Thr-570 is modified to Phosphothreonine. Lys-588 is modified (N6-succinyllysine).

This sequence belongs to the ALB/AFP/VDB family. In terms of assembly, interacts with FCGRT; this interaction regulates ALB homeostasis. Interacts with TASOR. In plasma, occurs in a covalently-linked complex with chromophore-bound alpha-1-microglobulin; this interaction does not prevent fatty acid binding to ALB. In terms of tissue distribution, plasma.

Its subcellular location is the secreted. Functionally, binds water, Ca(2+), Na(+), K(+), fatty acids, hormones, bilirubin and drugs. Its main function is the regulation of the colloidal osmotic pressure of blood. Major zinc transporter in plasma, typically binds about 80% of all plasma zinc. Major calcium and magnesium transporter in plasma, binds approximately 45% of circulating calcium and magnesium in plasma. Potentially has more than two calcium-binding sites and might additionally bind calcium in a non-specific manner. The shared binding site between zinc and calcium at residue Asp-273 suggests a crosstalk between zinc and calcium transport in the blood. The rank order of affinity is zinc &gt; calcium &gt; magnesium. Binds to the bacterial siderophore enterobactin and inhibits enterobactin-mediated iron uptake of E.coli from ferric transferrin, and may thereby limit the utilization of iron and growth of enteric bacteria such as E.coli. Does not prevent iron uptake by the bacterial siderophore aerobactin. The sequence is that of Albumin from Mesocricetus auratus (Golden hamster).